The primary structure comprises 285 residues: NAD kinase (285 aa).

Asp-66 serves as the catalytic Proton acceptor. NAD(+) is bound by residues 66–67 (DG), 137–138 (ND), Arg-148, Arg-165, Asp-167, and 178–183 (TAYSMS).

The protein belongs to the NAD kinase family. A divalent metal cation is required as a cofactor.

The protein localises to the cytoplasm. The enzyme catalyses NAD(+) + ATP = ADP + NADP(+) + H(+). Functionally, involved in the regulation of the intracellular balance of NAD and NADP, and is a key enzyme in the biosynthesis of NADP. Catalyzes specifically the phosphorylation on 2'-hydroxyl of the adenosine moiety of NAD to yield NADP. In Chlorobium luteolum (strain DSM 273 / BCRC 81028 / 2530) (Pelodictyon luteolum), this protein is NAD kinase.